The sequence spans 353 residues: uncharacterized protein (353 aa).

Residues 267–287 (GLPLVVIEAMAFGLPIVAFNC) form a helical membrane-spanning segment.

Belongs to the glycosyltransferase group 1 family. Glycosyltransferase 4 subfamily.

It is found in the membrane. This is an uncharacterized protein from Haemophilus influenzae (strain ATCC 51907 / DSM 11121 / KW20 / Rd).